The chain runs to 37 residues: Photosystem I reaction center subunit VIII (37 aa).

The chain crosses the membrane as a helical span at residues 7-27 (LPSIFVPLVGLVFPAIAMASL).

This sequence belongs to the PsaI family.

It localises to the plastid. The protein localises to the chloroplast thylakoid membrane. May help in the organization of the PsaL subunit. This is Photosystem I reaction center subunit VIII from Populus alba (White poplar).